A 192-amino-acid chain; its full sequence is UPF0149 protein KPN78578_32810 (192 aa).

It belongs to the UPF0149 family.

The sequence is that of UPF0149 protein KPN78578_32810 from Klebsiella pneumoniae subsp. pneumoniae (strain ATCC 700721 / MGH 78578).